The primary structure comprises 447 residues: GTPase Der (447 aa).

EngA-type G domains follow at residues 4 to 165 and 180 to 357; these read KIIT…PEEE and LQIV…KIWN. Residues 10–17, 57–61, 119–122, 186–193, 233–237, and 298–301 contribute to the GTP site; these read GRPNVGKS, DTPGL, NKCE, GRPNAGKS, DTAGL, and NKWD. The region spanning 358–443 is the KH-like domain; that stretch reads KKITTSKLNE…PIRFTYVKTK (86 aa).

This sequence belongs to the TRAFAC class TrmE-Era-EngA-EngB-Septin-like GTPase superfamily. EngA (Der) GTPase family. Associates with the 50S ribosomal subunit.

In terms of biological role, GTPase that plays an essential role in the late steps of ribosome biogenesis. The protein is GTPase Der of Rickettsia felis (strain ATCC VR-1525 / URRWXCal2) (Rickettsia azadi).